A 1233-amino-acid polypeptide reads, in one-letter code: uncharacterized protein (1233 aa).

Disordered stretches follow at residues S32–P51, A510–D529, and E882–S915. Composition is skewed to acidic residues over residues N513–D529 and E882–G905. Positions D906 to S915 are enriched in basic and acidic residues.

This is an uncharacterized protein from Dictyostelium discoideum (Social amoeba).